A 928-amino-acid chain; its full sequence is Nuclear pore complex-interacting protein family member B12 (928 aa).

The chain crosses the membrane as a helical span at residues 73-93 (VVITLWIVYLWVSLLKTIFWS). 2 disordered regions span residues 242–452 (RMGH…NIKT) and 663–928 (ERLR…RRLS). The span at 252–263 (QQHSITDNSLSL) shows a compositional bias: polar residues. The segment covering 349-359 (PLPPSAPPSAP) has biased composition (pro residues). Composition is skewed to basic and acidic residues over residues 406 to 416 (DNIKTPAERLR), 698 to 708 (DNIKTPAERLR), 740 to 750 (DNIKTPAERLR), and 782 to 792 (DNIKTPAERLR).

Belongs to the NPIP family.

Its subcellular location is the membrane. The sequence is that of Nuclear pore complex-interacting protein family member B12 from Homo sapiens (Human).